The primary structure comprises 353 residues: Trans-enoyl reductase fsa3 (353 aa).

Residue 45-48 coordinates NADP(+); sequence VDTK. 131 to 138 serves as a coordination point for substrate; sequence ISFMTTGL. NADP(+) contacts are provided by residues 166 to 169, 189 to 192, Y207, and 254 to 255; these read SSAT, SPRN, and LE. 275–279 contributes to the substrate binding site; that stretch reads GPQML. 344-345 lines the NADP(+) pocket; that stretch reads IS.

Belongs to the zinc-containing alcohol dehydrogenase family. In terms of assembly, monomer.

The enzyme catalyses L-serine + 7 malonyl-CoA + acetyl-CoA + 2 S-adenosyl-L-methionine + ATP + 8 NADPH + 11 H(+) = (5S)-3-[(2E,6R,8E,10E,12E)-2,6-dimethyltetradeca-2,8,10,12-tetraenoyl]-5-(hydroxymethyl)pyrrolidine-2,4-dione + AMP + 2 S-adenosyl-L-homocysteine + 7 CO2 + diphosphate + 8 NADP(+) + 8 CoA + 6 H2O. Its pathway is mycotoxin biosynthesis. Its function is as follows. Trans-enoyl reductase; part of the gene cluster that mediates the biosynthesis of HIV-1 integrase inhibitor equisetin and of fusarisetin A, both trans-fused decalin-containing tetramic acids showing also antimicrobial activity. The PKS module of fsa1 together with the enoylreductase fsa3 catalyze the formation of the polyketide unit which is then conjugated to L-serine by the condensation domain of the fsa1 NRPS module. Activity of the Dieckmann cyclase domain (RED) results in release of the Dieckmann product intermediate. Diels-Alderase fsa2 is involved in endo-selective Diels-Alder cycloaddition to form the decalin ring, leading to the production of N-desmethylequisetin also called trichosetin. Subsequent N-methylation is carried out by fsa4 to give equisetin. The enzymatic gene responsible for the conversion of equisetin to fusarisetin A has not been identified yet and is probably located outside of the fsa cluster. In Fusarium sp. (strain FN080326), this protein is Trans-enoyl reductase fsa3.